A 341-amino-acid chain; its full sequence is Holliday junction branch migration complex subunit RuvB (341 aa).

Residues 1–180 (MAKSHTLNPE…FGIQLRLDYY (180 aa)) are large ATPase domain (RuvB-L). Residues Leu-19, Arg-20, Gly-61, Lys-64, Thr-65, Thr-66, Arg-170, Tyr-180, and Arg-217 each contribute to the ATP site. Thr-65 is a Mg(2+) binding site. The tract at residues 181-251 (NDEEMKEIVL…LCLKAFEKMG (71 aa)) is small ATPAse domain (RuvB-S). The interval 254 to 341 (DLGLDGMDRQ…ENHGQDPTLF (88 aa)) is head domain (RuvB-H). Arg-309 and Arg-314 together coordinate DNA.

Belongs to the RuvB family. Homohexamer. Forms an RuvA(8)-RuvB(12)-Holliday junction (HJ) complex. HJ DNA is sandwiched between 2 RuvA tetramers; dsDNA enters through RuvA and exits via RuvB. An RuvB hexamer assembles on each DNA strand where it exits the tetramer. Each RuvB hexamer is contacted by two RuvA subunits (via domain III) on 2 adjacent RuvB subunits; this complex drives branch migration. In the full resolvosome a probable DNA-RuvA(4)-RuvB(12)-RuvC(2) complex forms which resolves the HJ.

The protein resides in the cytoplasm. The enzyme catalyses ATP + H2O = ADP + phosphate + H(+). Functionally, the RuvA-RuvB-RuvC complex processes Holliday junction (HJ) DNA during genetic recombination and DNA repair, while the RuvA-RuvB complex plays an important role in the rescue of blocked DNA replication forks via replication fork reversal (RFR). RuvA specifically binds to HJ cruciform DNA, conferring on it an open structure. The RuvB hexamer acts as an ATP-dependent pump, pulling dsDNA into and through the RuvAB complex. RuvB forms 2 homohexamers on either side of HJ DNA bound by 1 or 2 RuvA tetramers; 4 subunits per hexamer contact DNA at a time. Coordinated motions by a converter formed by DNA-disengaged RuvB subunits stimulates ATP hydrolysis and nucleotide exchange. Immobilization of the converter enables RuvB to convert the ATP-contained energy into a lever motion, pulling 2 nucleotides of DNA out of the RuvA tetramer per ATP hydrolyzed, thus driving DNA branch migration. The RuvB motors rotate together with the DNA substrate, which together with the progressing nucleotide cycle form the mechanistic basis for DNA recombination by continuous HJ branch migration. Branch migration allows RuvC to scan DNA until it finds its consensus sequence, where it cleaves and resolves cruciform DNA. The protein is Holliday junction branch migration complex subunit RuvB of Leptospira borgpetersenii serovar Hardjo-bovis (strain L550).